The primary structure comprises 1070 residues: MTVSTEVDHNDYTGNGVTTSFPYTFRIFKKSDLVVQVVDLNENITELILDTDYTVTGAGGYTCGDVVLSSPLANGYQISISRELPVTQETDLRNQGKFFAEVHENAFDKLTMLIQQVRSWLSLALRKPSFVANYYDALGNYIRNLRDPSRPQDAATKNYVDNLSEGNNSYADNLFSRTLRVPEKINTLPSSLDRANKIPAFDSNGNAIVIIPQSGSASDVLIELAKPSGSGLVGFSHSNNYNPGMVGEKLQNVVYPTDAPFYAPTDGTSDATTALQSAITHCEGKNAVLCINKSFSVSDSLSISSPLCVFAMNEQCGIVSSAPAGHAAVIFNGDNICWNGGFIRGLNQPSSSTIRQDGVLLNGNDCVLDNVSINGFFAKGLHTSNADGSGVGIRDYGTRNTISKCRVEYNKFGISLEGKDGWVLGNYVSNHYRMSSEAKPWDDTSNYWDGIVGGGEWLGVATGYLIDGNEFEDNGQSGIYAGGNGGIFAKNRITNNHIHGNWNRGIDFGVVQRLANSDVYENIITDNIVHNNRAANIWLAGVRDSIINNNNSWFTDDYRSMFAGNFDACVCLTLADGGEKAAPTGNQVNGNRCKTLESDDQISGFTLNITDTARGNQVRDNVLSPIGEAYIPNPELYAVNNIDIPTEFAFTPQLIGGSGVTLGNSSGKLTANGNVFSLSLSISAQSVSSPSGSLTIGYIPGLSGTSVRHHNVRTEFYNNLNTTMQRAQPYVNIGDSADQLRVYRLADGLSKDDLLEYFMSNSDLRMVGDIEIEPYNFSRSVTVVGHSFCTSDVMSTELNRLLGTDIYNFARGGASDVEVAMSQEAITRQYAPVGGSIPASGSVALTPTEVGIFWNGATGKCIFGGIDGTFSTTLVNAGTGETQLVFTRDSAGSAVSVSTTATFAMRPYTRFNTNTIPAGRKHSLHRDDIYIVWGGRNSTDYTRYVSELHTMVANMHTQRFVICPEFPYDTETTGTTGATNLAALNNNLKADFPDNYCQISGVDLLQNFKSKYNPAYAGDVTDIANGITPRSLREDNLHPSETLQPNGLYIGAKVNADFIAQFIKSKGWGG.

The protein localises to the virion. Functionally, structural component of the short non-contractile tail. The tail comprises six spikes that mediate primary attachment to the host cell lipopolysaccharides (LPS) and display endorhamnosidase enzymatic activity, hydrolyzing the linkage between rhamnose and galactose of the O-antigen polysaccharide. Digestion of the LPS brings the capsid near the cell outer membrane. In Salmonella phage epsilon15, this protein is Tail spike protein.